The sequence spans 1354 residues: Eukaryotic translation initiation factor 3 subunit A (1354 aa).

Lys-68 carries the N6-acetyllysine modification. The stretch at 82 to 120 forms a coiled coil; sequence NIKSLEDVVRAYLKLAEEKTEAAKEESQQMVLDIEDLDN. The PCI domain occupies 315–498; the sequence is MQRMSTRVLL…RTLSFGSDLN (184 aa). A phosphoserine mark is found at Ser-492 and Ser-584. An interaction with EIF3B region spans residues 664-835; it reads LDPDFIMAKQ…REERERAERA (172 aa). 3 disordered regions span residues 809 to 844, 866 to 1249, and 1262 to 1354; these read EKEE…LREY, EERE…RDRD, and DLRD…TVRR. Basic and acidic residues-rich tracts occupy residues 866–1136, 1148–1249, 1262–1302, and 1310–1343; these read EERE…DDAR, GWRE…RDRD, DLRD…DPPR, and SRER…TKNE. Ser-895 is subject to Phosphoserine. Residues 924–931 form a 1; truncated repeat; that stretch reads DDERPHRR. The tract at residues 924–1143 is 22 X 10 AA approximate tandem repeats of [DA]-[DE]-[ED]-R-[PLIGFSV]-[RPS]-[RW]-[RL]-[GNIHT]-[DGLPTAM]; sequence DDERPHRRDE…DARPGPWRPF (220 aa). Repeat unit 2 spans residues 932 to 941; sequence DEDRLRRLGG. A 3; approximate repeat occupies 942–951; the sequence is DDEERESSLR. Phosphoserine is present on Ser-949. A run of 18 repeats spans residues 953–962, 963–972, 973–982, 983–992, 993–1002, 1003–1012, 1013–1022, 1023–1032, 1033–1042, 1043–1052, 1053–1062, 1064–1073, 1074–1083, 1084–1093, 1094–1103, 1104–1113, 1114–1123, and 1124–1133. Phosphoserine is present on Ser-1038. Residues 1134-1143 form a 22; approximate repeat; sequence DARPGPWRPF. Phosphoserine occurs at positions 1159 and 1233. Residues Ser-1310 and Ser-1336 each carry the phosphoserine modification.

This sequence belongs to the eIF-3 subunit A family. In terms of assembly, component of the eukaryotic translation initiation factor 3 (eIF-3) complex, which is composed of 13 subunits: EIF3A, EIF3B, EIF3C, EIF3D, EIF3E, EIF3F, EIF3G, EIF3H, EIF3I, EIF3J, EIF3K, EIF3L and EIF3M. The eIF-3 complex appears to include 3 stable modules: module A is composed of EIF3A, EIF3B, EIF3G and EIF3I; module B is composed of EIF3F, EIF3H, and EIF3M; and module C is composed of EIF3C, EIF3D, EIF3E, EIF3L and EIF3K. EIF3C of module C binds EIF3B of module A and EIF3H of module B, thereby linking the three modules. EIF3J is a labile subunit that binds to the eIF-3 complex via EIF3B. The eIF-3 complex interacts with RPS6KB1 under conditions of nutrient depletion. Mitogenic stimulation leads to binding and activation of a complex composed of MTOR and RPTOR, leading to phosphorylation and release of RPS6KB1 and binding of EIF4B to eIF-3. Interacts with EIF4G1. Also interacts with KRT7 and PIWIL2. Post-translationally, phosphorylated. Phosphorylation is enhanced upon serum stimulation.

It localises to the cytoplasm. Its function is as follows. RNA-binding component of the eukaryotic translation initiation factor 3 (eIF-3) complex, which is required for several steps in the initiation of protein synthesis. The eIF-3 complex associates with the 40S ribosome and facilitates the recruitment of eIF-1, eIF-1A, eIF-2:GTP:methionyl-tRNAi and eIF-5 to form the 43S pre-initiation complex (43S PIC). The eIF-3 complex stimulates mRNA recruitment to the 43S PIC and scanning of the mRNA for AUG recognition. The eIF-3 complex is also required for disassembly and recycling of post-termination ribosomal complexes and subsequently prevents premature joining of the 40S and 60S ribosomal subunits prior to initiation. The eIF-3 complex specifically targets and initiates translation of a subset of mRNAs involved in cell proliferation, including cell cycling, differentiation and apoptosis, and uses different modes of RNA stem-loop binding to exert either translational activation or repression. The protein is Eukaryotic translation initiation factor 3 subunit A (Eif3a) of Rattus norvegicus (Rat).